The chain runs to 289 residues: Protease HtpX (289 aa).

Helical transmembrane passes span 7 to 27 and 38 to 58; these read LFLL…NIIF and GGIL…SLFM. Residue His-144 coordinates Zn(2+). Glu-145 is a catalytic residue. His-148 provides a ligand contact to Zn(2+). 2 helical membrane passes run 155–175 and 194–214; these read VTMT…SRII and LVFW…ATMI. Zn(2+) is bound at residue Glu-223.

This sequence belongs to the peptidase M48B family. Zn(2+) is required as a cofactor.

It is found in the cell inner membrane. This chain is Protease HtpX, found in Actinobacillus pleuropneumoniae serotype 5b (strain L20).